The primary structure comprises 278 residues: Adenosylcobinamide-GDP ribazoletransferase (278 aa).

A run of 7 helical transmembrane segments spans residues 31–51 (AMAL…SAVF), 66–86 (TLLP…GLHL), 115–135 (TIGA…VGAL), 148–168 (ILVA…GAVP), 187–207 (DAAL…LLDF), 215–237 (ALRA…RYLL), and 247–267 (ILGG…AMTI).

The protein belongs to the CobS family. Mg(2+) is required as a cofactor.

The protein localises to the cell membrane. It carries out the reaction alpha-ribazole + adenosylcob(III)inamide-GDP = adenosylcob(III)alamin + GMP + H(+). It catalyses the reaction alpha-ribazole 5'-phosphate + adenosylcob(III)inamide-GDP = adenosylcob(III)alamin 5'-phosphate + GMP + H(+). It participates in cofactor biosynthesis; adenosylcobalamin biosynthesis; adenosylcobalamin from cob(II)yrinate a,c-diamide: step 7/7. Functionally, joins adenosylcobinamide-GDP and alpha-ribazole to generate adenosylcobalamin (Ado-cobalamin). Also synthesizes adenosylcobalamin 5'-phosphate from adenosylcobinamide-GDP and alpha-ribazole 5'-phosphate. The chain is Adenosylcobinamide-GDP ribazoletransferase from Frankia casuarinae (strain DSM 45818 / CECT 9043 / HFP020203 / CcI3).